A 275-amino-acid chain; its full sequence is 1-deoxy-11-beta-hydroxypentalenate dehydrogenase (275 aa).

NAD(+) is bound at residue 12–36 (GAASGIGLALSARFARAGAGVVMAD). S144 is a substrate binding site. The Proton acceptor role is filled by Y157. K161 provides a ligand contact to NAD(+).

This sequence belongs to the short-chain dehydrogenases/reductases (SDR) family.

It catalyses the reaction 1-deoxy-11beta-hydroxypentalenate + NAD(+) = 1-deoxy-11-oxopentalenate + NADH + H(+). The protein operates within antibiotic biosynthesis; pentalenolactone biosynthesis. Catalyzes the oxidation of 1-deoxy-11-beta-hydroxypentalenic acid to 1-deoxy-11-oxopentalenic acid in the biosynthesis of pentalenolactone antibiotic. The protein is 1-deoxy-11-beta-hydroxypentalenate dehydrogenase (penF) of Streptomyces exfoliatus (Streptomyces hydrogenans).